The following is a 210-amino-acid chain: Probable molybdenum cofactor guanylyltransferase (210 aa).

Residues 18–20, lysine 31, asparagine 59, aspartate 86, and aspartate 111 each bind GTP; that span reads LAG. Aspartate 111 is a binding site for Mg(2+).

The protein belongs to the MobA family. Requires Mg(2+) as cofactor.

It localises to the cytoplasm. The catalysed reaction is Mo-molybdopterin + GTP + H(+) = Mo-molybdopterin guanine dinucleotide + diphosphate. Its function is as follows. Transfers a GMP moiety from GTP to Mo-molybdopterin (Mo-MPT) cofactor (Moco or molybdenum cofactor) to form Mo-molybdopterin guanine dinucleotide (Mo-MGD) cofactor. In Haloferax mediterranei (strain ATCC 33500 / DSM 1411 / JCM 8866 / NBRC 14739 / NCIMB 2177 / R-4) (Halobacterium mediterranei), this protein is Probable molybdenum cofactor guanylyltransferase (nasC).